A 251-amino-acid chain; its full sequence is Probable transcriptional regulatory protein Franean1_5147 (251 aa).

The protein belongs to the TACO1 family.

It is found in the cytoplasm. This chain is Probable transcriptional regulatory protein Franean1_5147, found in Parafrankia sp. (strain EAN1pec).